Here is a 365-residue protein sequence, read N- to C-terminus: Ribosomal RNA large subunit methyltransferase F (365 aa).

Residues 1 to 49 (MSKPAVKSVQSATAKTATRAVNIRQKVKAPKQAKPEAKGRVRPSKDKPR) form a disordered region. The segment covering 33-49 (AKPEAKGRVRPSKDKPR) has biased composition (basic and acidic residues).

Belongs to the methyltransferase superfamily. METTL16/RlmF family.

Its subcellular location is the cytoplasm. The catalysed reaction is adenosine(1618) in 23S rRNA + S-adenosyl-L-methionine = N(6)-methyladenosine(1618) in 23S rRNA + S-adenosyl-L-homocysteine + H(+). Functionally, specifically methylates the adenine in position 1618 of 23S rRNA. This is Ribosomal RNA large subunit methyltransferase F from Shewanella baltica (strain OS185).